We begin with the raw amino-acid sequence, 159 residues long: Photosystem II extrinsic protein U, chloroplastic (159 aa).

Belongs to the PsbU family. As to quaternary structure, PSII is composed of 1 copy each of membrane proteins PsbA, PsbB, PsbC, PsbD, PsbE, PsbF, PsbH, PsbI, PsbJ, PsbK, PsbL, PsbM, PsbT, PsbX, PsbY, PsbZ, Psb30/Ycf12, at least 3 peripheral proteins of the oxygen-evolving complex and a large number of cofactors. It forms dimeric complexes. Part of the oxygen-evolving complex of photosystem II.

It is found in the plastid. The protein localises to the chloroplast thylakoid membrane. In terms of biological role, one of the extrinsic, lumenal subunits of photosystem II (PSII). PSII is a light-driven water plastoquinone oxidoreductase, using light energy to abstract electrons from H(2)O, generating a proton gradient subsequently used for ATP formation. The extrinsic proteins stabilize the structure of photosystem II oxygen-evolving complex (OEC), the ion environment of oxygen evolution and protect the OEC against heat-induced inactivation. The protein is Photosystem II extrinsic protein U, chloroplastic of Karenia brevis (Red tide dinoflagellate).